Here is a 63-residue protein sequence, read N- to C-terminus: Large ribosomal subunit protein bL28 (63 aa).

This sequence belongs to the bacterial ribosomal protein bL28 family.

The sequence is that of Large ribosomal subunit protein bL28 from Beutenbergia cavernae (strain ATCC BAA-8 / DSM 12333 / CCUG 43141 / JCM 11478 / NBRC 16432 / NCIMB 13614 / HKI 0122).